The chain runs to 83 residues: Small ribosomal subunit protein uS17 (83 aa).

The protein belongs to the universal ribosomal protein uS17 family. As to quaternary structure, part of the 30S ribosomal subunit.

One of the primary rRNA binding proteins, it binds specifically to the 5'-end of 16S ribosomal RNA. In Campylobacter concisus (strain 13826), this protein is Small ribosomal subunit protein uS17.